We begin with the raw amino-acid sequence, 457 residues long: Putative ankyrin repeat protein L112 (457 aa).

11 ANK repeats span residues 62–91 (QRIT…NHNP), 104–132 (SKDT…ASIN), 133–162 (SSSL…EIIN), 193–219 (YINE…LDCS), 220–249 (ITVD…DPRK), 251–279 (KCWA…KPKE), 281–309 (NVDA…DTIT), 310–339 (RRDW…SQKS), 341–368 (NKAL…DFRQ), 400–429 (NNNE…DYNP), and 431–457 (KDQL…DTLK).

The protein is Putative ankyrin repeat protein L112 of Acanthamoeba polyphaga mimivirus (APMV).